Reading from the N-terminus, the 444-residue chain is Ribosome biogenesis protein WDR12 homolog (444 aa).

The tract at residues 7–87 (VLVKFVTKLP…ESTLEVEYVP (81 aa)) is ubiquitin-like (UBL) domain. The segment at 91-123 (PPQQKNSTPHDDWVSSVDGSRCAPASSSGGSPS) is disordered. WD repeat units follow at residues 105–148 (SSVD…VASV), 150–191 (AHAG…EEDA), and 203–242 (GHED…RWAA). The tract at residues 243–264 (GTAEASKKKRKTGTANGSAAAG) is disordered. 4 WD repeats span residues 272-310 (GHLH…AADT), 312-352 (NGSK…GSDA), 360-400 (AHGG…PLGM), and 403-444 (HHTD…YIVS).

It belongs to the WD repeat WDR12/YTM1 family.

Its subcellular location is the nucleus. The protein localises to the nucleolus. The protein resides in the nucleoplasm. In terms of biological role, required for maturation of ribosomal RNAs and formation of the large ribosomal subunit. In Chlamydomonas reinhardtii (Chlamydomonas smithii), this protein is Ribosome biogenesis protein WDR12 homolog.